A 320-amino-acid chain; its full sequence is uncharacterized protein (320 aa).

7 helical membrane-spanning segments follow: residues 24 to 44 (FEFSVHGTCVVFNLFLCIFFI), 65 to 85 (FVLSLPLFFLQFYLVVFLWSL), 105 to 125 (TTSCAQVLPLAVAIYRYFIVV), 132 to 152 (SWFVVVVHSIISFIFFVIAIL), 179 to 199 (ISLTLGLNLFAVFINVAIYTF), 226 to 246 (MIPILVSIPLLVGSFDFYFGY), and 253 to 275 (TSRWYATTFLSPLLTPISSMLSL).

Its subcellular location is the membrane. This is an uncharacterized protein from Caenorhabditis elegans.